We begin with the raw amino-acid sequence, 93 residues long: Acylphosphatase (93 aa).

Residues 3–93 enclose the Acylphosphatase-like domain; the sequence is KQQYFISGKV…FQFNNFKIYY (91 aa). Active-site residues include R18 and N36.

It belongs to the acylphosphatase family.

It carries out the reaction an acyl phosphate + H2O = a carboxylate + phosphate + H(+). The sequence is that of Acylphosphatase (acyP) from Borrelia garinii subsp. bavariensis (strain ATCC BAA-2496 / DSM 23469 / PBi) (Borreliella bavariensis).